We begin with the raw amino-acid sequence, 36 residues long: Photosystem I reaction center subunit VIII (36 aa).

Residues 7–29 (PSILVPLVGIIFPGISMALLFIY) traverse the membrane as a helical segment.

It belongs to the PsaI family.

It localises to the plastid. The protein localises to the chloroplast thylakoid membrane. Functionally, may help in the organization of the PsaL subunit. In Gracilaria tenuistipitata var. liui (Red alga), this protein is Photosystem I reaction center subunit VIII.